Reading from the N-terminus, the 358-residue chain is Nuclear receptor subfamily 1 group I member 3 (358 aa).

Positions 18–93 (PRNCVVCGDR…VGMRKDMILS (76 aa)) form a DNA-binding region, nuclear receptor. The NR C4-type zinc-finger motif lies at 21–41 (CVVCGDRATGYHFHALTCEGC). The residue at position 48 (T48) is a Phosphothreonine; by PKC. The segment at 57 to 81 (CPFAGRCEVSKAQRRHCPACRLQKC) adopts an NR C4-type zinc-finger fold. The NR LBD domain occupies 119 to 358 (QQKELIQTLL…MMPLLGEICS (240 aa)).

This sequence belongs to the nuclear hormone receptor family. NR1 subfamily. As to quaternary structure, heterodimer of NR1I3 and RXR. Interacts with PSMC4. Interacts with ECT2. Directly interacts with DNAJC7; this complex may also include HSP90. Interacts with CRY1. Interacts with CRY2 in a ligand-dependent manner. Phosphorylated at Thr-48 by PKC, dephosphorylation of Thr-48 is required for nuclear translocation and activation.

The protein localises to the nucleus. It is found in the cytoplasm. Its subcellular location is the cytoskeleton. Functionally, binds and transactivates the retinoic acid response elements that control expression of the retinoic acid receptor beta 2 and alcohol dehydrogenase 3 genes. Transactivates both the phenobarbital responsive element module of the human CYP2B6 gene and the CYP3A4 xenobiotic response element. In Rattus norvegicus (Rat), this protein is Nuclear receptor subfamily 1 group I member 3 (Nr1i3).